The sequence spans 319 residues: Cytochrome f (319 aa).

The first 34 residues, 1–34 (MQNRNTYEWAKKMTRLISVLVMIHIITRTSISNA), serve as a signal peptide directing secretion. Residues Tyr-35, Cys-55, Cys-58, and His-59 each coordinate heme. Residues 287 to 304 (GLLLFLASVILAQIFLVL) traverse the membrane as a helical segment.

It belongs to the cytochrome f family. The 4 large subunits of the cytochrome b6-f complex are cytochrome b6, subunit IV (17 kDa polypeptide, petD), cytochrome f and the Rieske protein, while the 4 small subunits are PetG, PetL, PetM and PetN. The complex functions as a dimer. It depends on heme as a cofactor.

Its subcellular location is the plastid. It is found in the chloroplast thylakoid membrane. Functionally, component of the cytochrome b6-f complex, which mediates electron transfer between photosystem II (PSII) and photosystem I (PSI), cyclic electron flow around PSI, and state transitions. This Pinus thunbergii (Japanese black pine) protein is Cytochrome f (petA).